The sequence spans 157 residues: 2-C-methyl-D-erythritol 2,4-cyclodiphosphate synthase (157 aa).

A divalent metal cation-binding residues include Asp-8 and His-10. Residues Asp-8–His-10 and His-34–Ser-35 contribute to the 4-CDP-2-C-methyl-D-erythritol 2-phosphate site. His-42 is an a divalent metal cation binding site. Residues Asp-56–Gly-58, Phe-61–Asp-65, Ala-100–Ala-106, Thr-132–Glu-135, Phe-139, and Arg-142 each bind 4-CDP-2-C-methyl-D-erythritol 2-phosphate.

It belongs to the IspF family. In terms of assembly, homotrimer. A divalent metal cation serves as cofactor.

It carries out the reaction 4-CDP-2-C-methyl-D-erythritol 2-phosphate = 2-C-methyl-D-erythritol 2,4-cyclic diphosphate + CMP. It participates in isoprenoid biosynthesis; isopentenyl diphosphate biosynthesis via DXP pathway; isopentenyl diphosphate from 1-deoxy-D-xylulose 5-phosphate: step 4/6. Its function is as follows. Involved in the biosynthesis of isopentenyl diphosphate (IPP) and dimethylallyl diphosphate (DMAPP), two major building blocks of isoprenoid compounds. Catalyzes the conversion of 4-diphosphocytidyl-2-C-methyl-D-erythritol 2-phosphate (CDP-ME2P) to 2-C-methyl-D-erythritol 2,4-cyclodiphosphate (ME-CPP) with a corresponding release of cytidine 5-monophosphate (CMP). The sequence is that of 2-C-methyl-D-erythritol 2,4-cyclodiphosphate synthase from Azotobacter vinelandii (strain DJ / ATCC BAA-1303).